A 232-amino-acid polypeptide reads, in one-letter code: Large ribosomal subunit protein uL1 (232 aa).

This sequence belongs to the universal ribosomal protein uL1 family. Part of the 50S ribosomal subunit.

Binds directly to 23S rRNA. The L1 stalk is quite mobile in the ribosome, and is involved in E site tRNA release. In terms of biological role, protein L1 is also a translational repressor protein, it controls the translation of the L11 operon by binding to its mRNA. This is Large ribosomal subunit protein uL1 from Bartonella bacilliformis (strain ATCC 35685 / KC583 / Herrer 020/F12,63).